The chain runs to 386 residues: Delta(7)-sterol 5(6)-desaturase ERG3 (386 aa).

3 helical membrane-spanning segments follow: residues 120–140, 172–192, and 206–226; these read LSLFIITTIFGWLLYFIVAYL, IPVMVLLTIPFFLLELNGYSF, and AILWQIPKFILFTDCGIYFLH. One can recognise a Fatty acid hydroxylase domain in the interval 214-337; sequence FILFTDCGIY…FTTLWDRLGN (124 aa). Residues 226–230 carry the Histidine box-1 motif; sequence HRWLH. The short motif at 239 to 243 is the Histidine box-2 element; that stretch reads HKPHH. Residues 272–292 traverse the membrane as a helical segment; that stretch reads PLLFPLHKVLYLFLFTFVNFW. The Histidine box-3 signature appears at 314 to 318; that stretch reads HTVHH.

This sequence belongs to the sterol desaturase family. Requires Fe cation as cofactor.

The protein localises to the endoplasmic reticulum membrane. The enzyme catalyses a Delta(7)-sterol + 2 Fe(II)-[cytochrome b5] + O2 + 2 H(+) = a Delta(5),Delta(7)-sterol + 2 Fe(III)-[cytochrome b5] + 2 H2O. The protein operates within steroid metabolism; ergosterol biosynthesis; ergosterol from zymosterol: step 3/5. Its function is as follows. C-5 sterol desaturase; part of the third module of ergosterol biosynthesis pathway that includes the late steps of the pathwa. ERG3 catalyzes the introduction of a C-5 double bond in the B ring to produce 5-dehydroepisterol. The third module or late pathway involves the ergosterol synthesis itself through consecutive reactions that mainly occur in the endoplasmic reticulum (ER) membrane. Firstly, the squalene synthase ERG9 catalyzes the condensation of 2 farnesyl pyrophosphate moieties to form squalene, which is the precursor of all steroids. Squalene synthase is crucial for balancing the incorporation of farnesyl diphosphate (FPP) into sterol and nonsterol isoprene synthesis. Secondly, the squalene epoxidase ERG1 catalyzes the stereospecific oxidation of squalene to (S)-2,3-epoxysqualene, which is considered to be a rate-limiting enzyme in steroid biosynthesis. Then, the lanosterol synthase ERG7 catalyzes the cyclization of (S)-2,3 oxidosqualene to lanosterol, a reaction that forms the sterol core. In the next steps, lanosterol is transformed to zymosterol through a complex process involving various demethylation, reduction and desaturation reactions. The lanosterol 14-alpha-demethylase ERG11 (also known as CYP51) catalyzes C14-demethylation of lanosterol to produce 4,4'-dimethyl cholesta-8,14,24-triene-3-beta-ol, which is critical for ergosterol biosynthesis. The C-14 reductase ERG24 reduces the C14=C15 double bond of 4,4-dimethyl-cholesta-8,14,24-trienol to produce 4,4-dimethyl-cholesta-8,24-dienol. 4,4-dimethyl-cholesta-8,24-dienol is substrate of the C-4 demethylation complex ERG25-ERG26-ERG27 in which ERG25 catalyzes the three-step monooxygenation required for the demethylation of 4,4-dimethyl and 4alpha-methylsterols, ERG26 catalyzes the oxidative decarboxylation that results in a reduction of the 3-beta-hydroxy group at the C-3 carbon to an oxo group, and ERG27 is responsible for the reduction of the keto group on the C-3. ERG28 has a role as a scaffold to help anchor ERG25, ERG26 and ERG27 to the endoplasmic reticulum and ERG29 regulates the activity of the iron-containing C4-methylsterol oxidase ERG25. Then, the sterol 24-C-methyltransferase ERG6 catalyzes the methyl transfer from S-adenosyl-methionine to the C-24 of zymosterol to form fecosterol. The C-8 sterol isomerase ERG2 catalyzes the reaction which results in unsaturation at C-7 in the B ring of sterols and thus converts fecosterol to episterol. The sterol-C5-desaturase ERG3 then catalyzes the introduction of a C-5 double bond in the B ring to produce 5-dehydroepisterol. The C-22 sterol desaturase ERG5 further converts 5-dehydroepisterol into ergosta-5,7,22,24(28)-tetraen-3beta-ol by forming the C-22(23) double bond in the sterol side chain. Finally, ergosta-5,7,22,24(28)-tetraen-3beta-ol is substrate of the C-24(28) sterol reductase ERG4 to produce ergosterol. This is Delta(7)-sterol 5(6)-desaturase ERG3 from Candida albicans (strain SC5314 / ATCC MYA-2876) (Yeast).